A 305-amino-acid chain; its full sequence is Oligopeptide transport system permease protein OppC (305 aa).

Helical transmembrane passes span 43 to 63, 105 to 125, 166 to 185, 212 to 232, 236 to 256, and 274 to 294; these read AMVG…APMF, ISIF…VIWG, LFTI…ARIV, LFKH…TLTV, IFTE…LASW, and LFFP…VGDG. The ABC transmembrane type-1 domain maps to 103–292; sequence ARISIFIGVA…ITMFGFNVVG (190 aa).

It belongs to the binding-protein-dependent transport system permease family. OppBC subfamily. The complex is composed of two ATP-binding proteins (OppD and OppF), two transmembrane proteins (OppB and OppC) and a solute-binding protein (OppA).

Its subcellular location is the cell membrane. Part of the ABC transporter complex OppABCDF involved in the uptake of oligopeptides. Probably responsible for the translocation of the substrate across the membrane. Required for sporulation and genetic competence. The polypeptide is Oligopeptide transport system permease protein OppC (Bacillus subtilis (strain 168)).